The primary structure comprises 464 residues: NAD(P) transhydrogenase subunit beta (464 aa).

Helical transmembrane passes span 54–74, 86–106, 126–146, 164–184, 191–211, and 227–247; these read VQAYAWIVLAIAIGGAIGTVI, LVAAFHSLVGMAAVLVATGAL, VEMSLGLAVGAITFSGSVIAF, HPLNAVLGILLVVLLVVFAAT, FALMILAFALGFLLIIPIGGA, and AAAGIGFTLGNPLLIIAGALV. NADP(+) is bound by residues 316–317, 348–353, 390–394, 425–432, and 451–452; these read YG, VAGRMP, GANDV, KRSMASGY, and DA.

Belongs to the PNT beta subunit family. In terms of assembly, complex of an alpha and a beta chain; in Rhodospirillum, the alpha chain seems to be made of two subunits.

The protein localises to the cell inner membrane. It catalyses the reaction NAD(+) + NADPH + H(+)(in) = NADH + NADP(+) + H(+)(out). Functionally, the transhydrogenation between NADH and NADP is coupled to respiration and ATP hydrolysis and functions as a proton pump across the membrane. In Rhodospirillum rubrum (strain ATCC 11170 / ATH 1.1.1 / DSM 467 / LMG 4362 / NCIMB 8255 / S1), this protein is NAD(P) transhydrogenase subunit beta (pntB).